A 226-amino-acid chain; its full sequence is Leucyl/phenylalanyl-tRNA--protein transferase (226 aa).

The protein belongs to the L/F-transferase family.

It is found in the cytoplasm. It carries out the reaction N-terminal L-lysyl-[protein] + L-leucyl-tRNA(Leu) = N-terminal L-leucyl-L-lysyl-[protein] + tRNA(Leu) + H(+). It catalyses the reaction N-terminal L-arginyl-[protein] + L-leucyl-tRNA(Leu) = N-terminal L-leucyl-L-arginyl-[protein] + tRNA(Leu) + H(+). The catalysed reaction is L-phenylalanyl-tRNA(Phe) + an N-terminal L-alpha-aminoacyl-[protein] = an N-terminal L-phenylalanyl-L-alpha-aminoacyl-[protein] + tRNA(Phe). In terms of biological role, functions in the N-end rule pathway of protein degradation where it conjugates Leu, Phe and, less efficiently, Met from aminoacyl-tRNAs to the N-termini of proteins containing an N-terminal arginine or lysine. This is Leucyl/phenylalanyl-tRNA--protein transferase from Pseudomonas putida (strain W619).